The sequence spans 152 residues: FAD synthase (152 aa).

ATP contacts are provided by residues 16–17, 21–24, aspartate 101, and tyrosine 129; these read TF and HPGH.

It belongs to the archaeal FAD synthase family. Homodimer. A divalent metal cation is required as a cofactor.

It carries out the reaction FMN + ATP + H(+) = FAD + diphosphate. It participates in cofactor biosynthesis; FAD biosynthesis; FAD from FMN: step 1/1. In terms of biological role, catalyzes the transfer of the AMP portion of ATP to flavin mononucleotide (FMN) to produce flavin adenine dinucleotide (FAD) coenzyme. This is FAD synthase from Methanocaldococcus vulcanius (strain ATCC 700851 / DSM 12094 / M7) (Methanococcus vulcanius).